A 953-amino-acid polypeptide reads, in one-letter code: uncharacterized protein (953 aa).

The next 11 membrane-spanning stretches (helical) occupy residues 23–43, 103–123, 148–168, 392–412, 435–455, 481–501, 540–560, 575–595, 599–619, 642–662, and 666–686; these read VVTS…AFLI, YLFI…PILL, GRYF…LYII, VSAI…VGMI, LLGL…MSFL, AYFA…SAAT, ISSG…LGAF, LSSM…VITF, IISP…YIAY, LFQT…LFAV, and WGPI…HLHL. A disordered region spans residues 910-953; it reads VPPPYNDVKDEANGEANGEFDTASKENNPFADPKYKEEESRSAV. Residues 942 to 953 are compositionally biased toward basic and acidic residues; sequence PKYKEEESRSAV. Position 949 is a phosphoserine (serine 949).

The protein belongs to the CSC1 (TC 1.A.17) family.

It localises to the membrane. Its function is as follows. Acts as an osmosensitive calcium-permeable cation channel. This is an uncharacterized protein from Saccharomyces cerevisiae (strain ATCC 204508 / S288c) (Baker's yeast).